The primary structure comprises 73 residues: Neurotoxin Cex13 (73 aa).

The N-terminal stretch at 1 to 7 (ATGNVWA) is a signal peptide. The LCN-type CS-alpha/beta domain occupies 8–71 (KDGYLVIIKT…TWPLPDKTCG (64 aa)). Intrachain disulfides connect Cys-19-Cys-70, Cys-23-Cys-46, Cys-32-Cys-51, and Cys-36-Cys-53. Cysteine amide is present on Cys-70. Residues 71-73 (GTK) constitute a propeptide that is removed on maturation.

This sequence belongs to the long (4 C-C) scorpion toxin superfamily. Sodium channel inhibitor family. Beta subfamily. As to expression, expressed by the venom gland.

It is found in the secreted. Functionally, beta toxins bind voltage-independently at site-4 of sodium channels (Nav) and shift the voltage of activation toward more negative potentials thereby affecting sodium channel activation and promoting spontaneous and repetitive firing. In Centruroides exilicauda (Bark scorpion), this protein is Neurotoxin Cex13.